The following is a 177-amino-acid chain: VKSTNLMAFVATKMLERQEDLDTCTEMQVEKMKASTKARLRTESSFAPRTWEDAIKDEILRRSVDTSSLDRWPELKQELENVSDALKADSLWLPMKSLSLYSEVSNQEPSSIPIGEMKHQILTRLKLICSRLEKLDHNLSKAVLGIQNSEDLILIIYNRDICKNTILMIKSLCNSLI.

2 short sequence motifs (nuclear export signal) span residues 91-100 and 117-127; these read LWLPMKSLSL and MKHQILTRLKL.

In terms of assembly, binds M1 protein. May interact with human nucleoporins and exportin XPO1/CRM1.

The protein resides in the virion. It is found in the host nucleus. Functionally, mediates the nuclear export of encapsidated genomic RNAs (ribonucleoproteins, RNPs). Acts as an adapter between viral RNPs complexes and the nuclear export machinery of the cell. Possesses no intrinsic RNA-binding activity, but includes a C-terminal M1-binding domain. This domain is believed to allow recognition of RNPs to which the M1 protein is bound. Because the M1 protein is not available in large quantities until the later stages of infection, such an indirect recognition mechanism probably ensures that genomic RNPs are not exported from the nucleus before sufficient quantities of viral mRNA and progeny genomic RNA have been synthesized. Furthermore, the RNPs enters the cytoplasm only when they have associated with the M1 protein that is necessary to guide them to the plasma membrane. May down-regulate viral RNA synthesis when overproduced. The protein is Nuclear export protein (NS) of Homo sapiens (Human).